The following is a 254-amino-acid chain: Protein PET122, mitochondrial (254 aa).

A mitochondrion-targeting transit peptide spans 1–8; the sequence is MLTITKRL. Residues 185–254 form an essential for PET122 function region; sequence QAAALALFGR…IKRRGFEINT (70 aa).

The protein resides in the mitochondrion inner membrane. Functionally, required for expression of the mitochondrial gene for cytochrome c oxidase subunit 3 (COX3). PET122 seems to work by directly interacting with the small ribosomal subunit to promote translation initiation on the COX3 mRNA. In Saccharomyces cerevisiae (strain ATCC 204508 / S288c) (Baker's yeast), this protein is Protein PET122, mitochondrial (PET122).